A 355-amino-acid chain; its full sequence is Probable tRNA-dihydrouridine synthase 1 (355 aa).

FMN contacts are provided by residues 48-50 and Gln-102; that span reads PLS. Catalysis depends on Cys-132, which acts as the Proton donor. FMN-binding positions include Lys-171, 232–234, and 256–257; these read NGD and SR.

This sequence belongs to the Dus family. The cofactor is FMN.

It carries out the reaction a 5,6-dihydrouridine in tRNA + NAD(+) = a uridine in tRNA + NADH + H(+). It catalyses the reaction a 5,6-dihydrouridine in tRNA + NADP(+) = a uridine in tRNA + NADPH + H(+). Catalyzes the synthesis of 5,6-dihydrouridine (D), a modified base found in the D-loop of most tRNAs, via the reduction of the C5-C6 double bond in target uridines. This Synechocystis sp. (strain ATCC 27184 / PCC 6803 / Kazusa) protein is Probable tRNA-dihydrouridine synthase 1 (dus1).